The chain runs to 365 residues: Aminotransferase poxL (365 aa).

R92 contributes to the pyridoxal 5'-phosphate binding site. K193 is modified (N6-(pyridoxal phosphate)lysine). Position 229 (E229) interacts with pyridoxal 5'-phosphate.

Belongs to the class-IV pyridoxal-phosphate-dependent aminotransferase family. It depends on pyridoxal 5'-phosphate as a cofactor.

The protein operates within secondary metabolite biosynthesis. Its function is as follows. Aminotransferase; part of the gene cluster that mediates the biosynthesis of oxaleimides, cytotoxic compounds containing an unusual disubstituted succinimide moiety. The first step of the pathway is provided by the HR-PKS poxF that serves in a new mode of collaborative biosynthesis with the PKS-NRPS poxE, by providing the olefin containing amino acid substrate via the synthesis of an ACP-bound dec-4-enoate. The cytochrome P450 monooxygenase poxM-catalyzed oxidation at the alpha-position creates the enzyme-bound 2-hydroxydec-4-enoyl-ACP thioester, which may be prone to spontaneous hydrolysis to yield 2-hydroxydec-4-enoic acid due to increased electrophilicity of the carbonyl. 2-hydroxydec-4-enoic acid can then be further oxidized by poxM to yield the alpha-ketoacid 2-oxodec-4-enoicacid, which is reductively aminated by the aminotransferase poxL to yield (S,E)-2-aminodec-4-enoic acid. The Hybrid PKS-NRPS synthetase poxE then performs condensation between the octaketide product of its PKS modules and the amino group of (S,E)-2-aminodec-4-enoic acid which is activated and incorporated by the adenylation domain. The resulting aminoacyl product can be cyclized by the Diels-Alderase PoxQ and reductively released by the reductive (R) domain of poxE to yield an aldehyde intermediate. The released aldehyde is then substrate for a Knoevenagel condensation by the hydrolyase poxO followed by an oxidation at the 5-position of the pyrrolidone ring. The presence of the olefin from the amino acid building block allows for migration of the substituted allyl group to occur. This allylic transposition reaction takes place in a conjugate addition, semipinacol-like fashion to yield a succinimide intermediate. Iterative two-electron oxidations of the C7 methyl of the succinimide intermediate to the carboxylic acid can be catalyzed by one of two remaining cytochrome P450 monooxygenasess poxC or poxD to yield oxaleimide A. Subsequent oxidation yields the maleimide scaffold oxaleimide I. Both oxaleimide A and oxaleimide I can undergo oxidative modifications in the decalin ring to yield the series of products oxaleimides B to H. This chain is Aminotransferase poxL, found in Penicillium oxalicum.